A 402-amino-acid polypeptide reads, in one-letter code: Phosphoglycerate kinase (402 aa).

Residues 30–32 (DFN), Arg46, 70–73 (HLGR), Arg126, and Arg159 contribute to the substrate site. Residues Lys210, Glu332, and 358-361 (GGDT) each bind ATP.

This sequence belongs to the phosphoglycerate kinase family. In terms of assembly, monomer.

The protein resides in the cytoplasm. The enzyme catalyses (2R)-3-phosphoglycerate + ATP = (2R)-3-phospho-glyceroyl phosphate + ADP. The protein operates within carbohydrate degradation; glycolysis; pyruvate from D-glyceraldehyde 3-phosphate: step 2/5. The polypeptide is Phosphoglycerate kinase (Helicobacter hepaticus (strain ATCC 51449 / 3B1)).